We begin with the raw amino-acid sequence, 239 residues long: Ribonuclease HII (239 aa).

An RNase H type-2 domain is found at 18 to 231 (KIIVGLDEAG…SKNLLKEIEE (214 aa)). D24, E25, and D125 together coordinate a divalent metal cation.

It belongs to the RNase HII family. Mn(2+) is required as a cofactor. Mg(2+) serves as cofactor.

It is found in the cytoplasm. It carries out the reaction Endonucleolytic cleavage to 5'-phosphomonoester.. Endonuclease that specifically degrades the RNA of RNA-DNA hybrids. The protein is Ribonuclease HII of Methanococcus maripaludis (strain C7 / ATCC BAA-1331).